The following is a 62-amino-acid chain: MKIHLFFFILLFWVTILPARSNFDPKYRFERCAKVKGICKTFCDDDEYDYGYCIKWRNQCCI.

The first 21 residues, 1–21 (MKIHLFFFILLFWVTILPARS), serve as a signal peptide directing secretion. Disulfide bonds link C32-C60, C39-C53, and C43-C61.

The protein belongs to the beta-defensin family.

It is found in the secreted. Functionally, has antibacterial activity. The polypeptide is Beta-defensin 110 (DEFB110) (Canis lupus familiaris (Dog)).